A 1073-amino-acid chain; its full sequence is PX domain-containing protein LEC1 (1073 aa).

Positions 218–228 (CTESVDNDKSS) are enriched in basic and acidic residues. The interval 218 to 240 (CTESVDNDKSSKSTPTSSPKSHA) is disordered. The span at 229–238 (KSTPTSSPKS) shows a compositional bias: low complexity. The PX domain occupies 273 to 506 (LFSKLSLGVP…RFFLSGPNLD (234 aa)). 2 positions are modified to phosphoserine: Ser-310 and Ser-451. Residues 431 to 456 (IKEEDNIDEDEYEEEGEGEESDFDEY) form a disordered region. The span at 432–453 (KEEDNIDEDEYEEEGEGEESDF) shows a compositional bias: acidic residues.

The protein resides in the endoplasmic reticulum membrane. The protein localises to the lipid droplet. In terms of biological role, phosphoinositide-binding protein that plays a role in regulation of ergosterol distribution in the cell. Facilitates ergosterol transport between plasma membrane and lipid droplets. The polypeptide is PX domain-containing protein LEC1 (Saccharomyces cerevisiae (strain ATCC 204508 / S288c) (Baker's yeast)).